The following is a 347-amino-acid chain: Phenylalanine--tRNA ligase alpha subunit (347 aa).

Mg(2+) is bound at residue E261.

This sequence belongs to the class-II aminoacyl-tRNA synthetase family. Phe-tRNA synthetase alpha subunit type 1 subfamily. In terms of assembly, tetramer of two alpha and two beta subunits. The cofactor is Mg(2+).

It is found in the cytoplasm. The enzyme catalyses tRNA(Phe) + L-phenylalanine + ATP = L-phenylalanyl-tRNA(Phe) + AMP + diphosphate + H(+). The polypeptide is Phenylalanine--tRNA ligase alpha subunit (Streptococcus equi subsp. zooepidemicus (strain MGCS10565)).